A 673-amino-acid polypeptide reads, in one-letter code: B3 domain-containing protein Os01g0905400 (673 aa).

A compositionally biased stretch (basic and acidic residues) spans 1–34; the sequence is MVELIKVPKIEQEEGNADSHGKEKADVVHEEKTE. Positions 1–44 are disordered; that stretch reads MVELIKVPKIEQEEGNADSHGKEKADVVHEEKTEKVKRRRKRVS. The segment at residues 79–172 is a DNA-binding region (TF-B3 1); that stretch reads LPSFFKIMVG…VFTVQIFAIS (94 aa). Residues 315–337 are disordered; it reads PSFSYPESSNVMTADKESERSHQ. The segment covering 328 to 337 has biased composition (basic and acidic residues); it reads ADKESERSHQ. The segment at residues 576-671 is a DNA-binding region (TF-B3 2); that stretch reads SKKFCITIPP…ELSFQVLVPN (96 aa).

It is found in the nucleus. The polypeptide is B3 domain-containing protein Os01g0905400 (Oryza sativa subsp. japonica (Rice)).